The sequence spans 736 residues: Zinc finger CCCH domain-containing protein 14 (736 aa).

Methionine 1 bears the N-acetylmethionine mark. A compositionally biased stretch (polar residues) spans 77–103 (TTEPSSLKSPDTSIFDSNVPSNKSSFS). Residues 77–153 (TTEPSSLKSP…RHSYDDGAST (77 aa)) are disordered. Position 85 is a phosphoserine (serine 85). Residues lysine 99, lysine 139, lysine 175, and lysine 198 each participate in a glycyl lysine isopeptide (Lys-Gly) (interchain with G-Cter in SUMO2) cross-link. The segment covering 123 to 148 (RPEKRDSRVSTSSQEHKSTNVRHSYD) has biased composition (basic and acidic residues). The residue at position 240 (serine 240) is a Phosphoserine. Glycyl lysine isopeptide (Lys-Gly) (interchain with G-Cter in SUMO2) cross-links involve residues lysine 245, lysine 283, and lysine 295. Positions 308–350 (FSHDGEEEEEDEDYGTRVGSLSSSVSVPAKPERRPSLPPSKQA) are disordered. Phosphoserine occurs at positions 309, 327, and 343. At lysine 357 the chain carries N6-acetyllysine; alternate. A Glycyl lysine isopeptide (Lys-Gly) (interchain with G-Cter in SUMO2); alternate cross-link involves residue lysine 357. The segment covering 367–380 (TKTTNYPAVPQKQT) has biased composition (polar residues). A disordered region spans residues 367 to 386 (TKTTNYPAVPQKQTLPVAPR). Lysine 378 participates in a covalent cross-link: Glycyl lysine isopeptide (Lys-Gly) (interchain with G-Cter in SUMO2). Phosphoserine occurs at positions 390 and 409. The tract at residues 400–420 (QGQNRAPRISPPVKEEEAKGD) is disordered. Residues lysine 413 and lysine 489 each participate in a glycyl lysine isopeptide (Lys-Gly) (interchain with G-Cter in SUMO2) cross-link. A phosphoserine mark is found at serine 498, serine 515, serine 527, and serine 620. C3H1-type zinc fingers lie at residues 595-620 (EKLL…HPIS), 621-640 (PCKA…VHPN), 641-656 (CKYD…PFTH), 682-699 (CRYF…YHPK), and 701-719 (CRFN…HPTI).

Belongs to the ZC3H14 family. As to quaternary structure, homodimer; facilitating circular RNAs (circRNAs) formation. Associates with the spliceosome. Interacts with HOOK2. Interacts with ZFC3H1 in a RNase-sensitive manner.

It localises to the nucleus speckle. Its function is as follows. RNA-binding protein involved in the biogenesis of circular RNAs (circRNAs), which are produced by back-splicing circularization of pre-mRNAs. Acts by binding to both exon-intron boundary and 3'-UTR of pre-mRNAs to promote circRNA biogenesis through dimerization and the association with the spliceosome. Required for spermatogenesis via involvement in circRNA biogenesis. Regulates the pre-mRNA processing of ATP5MC1; preventing its degradation. Also binds the poly(A) tail of mRNAs; controlling poly(A) length in neuronal cells. This chain is Zinc finger CCCH domain-containing protein 14, found in Rattus norvegicus (Rat).